We begin with the raw amino-acid sequence, 92 residues long: Small ribosomal subunit protein uS19 (92 aa).

It belongs to the universal ribosomal protein uS19 family.

In terms of biological role, protein S19 forms a complex with S13 that binds strongly to the 16S ribosomal RNA. This is Small ribosomal subunit protein uS19 from Bacillus cereus (strain B4264).